The chain runs to 286 residues: Pyridoxal kinase PdxY (286 aa).

Substrate contacts are provided by residues serine 9 and 44–45 (TQ). Residues aspartate 111, alanine 143, glutamate 148, lysine 181, and 208–211 (RPLV) contribute to the ATP site. A substrate-binding site is contributed by aspartate 223.

This sequence belongs to the pyridoxine kinase family. PdxY subfamily. Homodimer. It depends on Mg(2+) as a cofactor.

The enzyme catalyses pyridoxal + ATP = pyridoxal 5'-phosphate + ADP + H(+). The protein operates within cofactor metabolism; pyridoxal 5'-phosphate salvage; pyridoxal 5'-phosphate from pyridoxal: step 1/1. Its function is as follows. Pyridoxal kinase involved in the salvage pathway of pyridoxal 5'-phosphate (PLP). Catalyzes the phosphorylation of pyridoxal to PLP. In Yersinia pseudotuberculosis serotype I (strain IP32953), this protein is Pyridoxal kinase PdxY.